Here is a 393-residue protein sequence, read N- to C-terminus: Chalcone synthase LF2 (393 aa).

Residue cysteine 164 is part of the active site.

This sequence belongs to the thiolase-like superfamily. Chalcone/stilbene synthases family.

The catalysed reaction is (E)-4-coumaroyl-CoA + 3 malonyl-CoA + 3 H(+) = 2',4,4',6'-tetrahydroxychalcone + 3 CO2 + 4 CoA. Its pathway is secondary metabolite biosynthesis; flavonoid biosynthesis. The primary product of this enzyme is 4,2',4',6'-tetrahydroxychalcone (also termed naringenin-chalcone or chalcone) which can under specific conditions spontaneously isomerize into naringenin. This is Chalcone synthase LF2 (CHS-LF2) from Ipomoea batatas (Sweet potato).